Here is a 4998-residue protein sequence, read N- to C-terminus: SCO-spondin (4998 aa).

Residues 1 to 17 (MLPLALLFGMLWTQANG) form the signal peptide. Residues 18–102 (HWCEQIETVH…ACCPGWGGAH (85 aa)) enclose the EMI domain. The 170-residue stretch at 72–241 (GLCAIYKPPE…KLPGSEPGCL (170 aa)) folds into the VWFD 1 domain. Intrachain disulfides connect cysteine 74–cysteine 202 and cysteine 103–cysteine 240. N-linked (GlcNAc...) asparagine glycans are attached at residues asparagine 88 and asparagine 130. The 56-residue stretch at 349-404 (CPGGQLYSDCVSSCPPSCSAVAQGEEGSCGKECVSGCECPTGLFWDGALCVPAAHC) folds into the TIL 1 domain. In terms of domain architecture, VWFC 1 spans 404–496 (CPCYHRRQRY…HGACDTGSCL (93 aa)). In terms of domain architecture, VWFD 2 spans 442 to 615 (AECAVGGDGH…FQVSGDGRCP (174 aa)). Intrachain disulfides connect cysteine 444-cysteine 577 and cysteine 468-cysteine 614. Residues asparagine 534 and asparagine 698 are each glycosylated (N-linked (GlcNAc...) asparagine). In terms of domain architecture, TIL 2 spans 706–759 (CPGGQVYQECAPVCGHHCGEPEDCKELGICVAGCNCPPGLLWDLEGQCVPPSMC). 4 N-linked (GlcNAc...) asparagine glycosylation sites follow: asparagine 771, asparagine 790, asparagine 824, and asparagine 866. The region spanning 892 to 1062 (GWCQASGAPH…HSWRLNPLCP (171 aa)) is the VWFD 3 domain. Cystine bridges form between cysteine 894/cysteine 1026, cysteine 916/cysteine 1061, and cysteine 937/cysteine 944. One can recognise a TIL 3 domain in the interval 1153–1209 (CEGGQVYEPCGSTCPPTCHDHHSELRWHCQVITCVEGCFCPEGTLLHGGACMKLAAC). Asparagine 1230 carries N-linked (GlcNAc...) asparagine glycosylation. 4 consecutive LDL-receptor class A domains span residues 1253 to 1290 (GCAE…EGCA), 1293 to 1328 (VCGE…EQGC), 1329 to 1365 (LCPH…ESCL), and 1369 to 1407 (SCIS…SHCS). 12 disulfides stabilise this stretch: cysteine 1254–cysteine 1267, cysteine 1261–cysteine 1280, cysteine 1274–cysteine 1289, cysteine 1294–cysteine 1306, cysteine 1301–cysteine 1319, cysteine 1313–cysteine 1328, cysteine 1330–cysteine 1342, cysteine 1337–cysteine 1355, cysteine 1349–cysteine 1364, cysteine 1370–cysteine 1382, cysteine 1377–cysteine 1395, and cysteine 1389–cysteine 1406. Residues 1406–1440 (CSLPSLPTPPGGIGQNPSTSSLDTAPSPVGSTSPA) are disordered. Positions 1420-1440 (QNPSTSSLDTAPSPVGSTSPA) are enriched in polar residues. 2 consecutive LDL-receptor class A domains span residues 1442 to 1478 (PCSL…LDCG) and 1480 to 1519 (PCML…DVCE). Disulfide bonds link cysteine 1443-cysteine 1455, cysteine 1450-cysteine 1468, cysteine 1462-cysteine 1477, cysteine 1481-cysteine 1494, cysteine 1488-cysteine 1507, and cysteine 1501-cysteine 1518. Asparagine 1528 is a glycosylation site (N-linked (GlcNAc...) asparagine). The LDL-receptor class A 7 domain maps to 1533–1571 (PCPEFSCPDGTCIDFLLVCDGNPDCELADETEPSLDEQG). 9 cysteine pairs are disulfide-bonded: cysteine 1534-cysteine 1544, cysteine 1539-cysteine 1557, cysteine 1551-cysteine 1572, cysteine 1584-cysteine 1620, cysteine 1588-cysteine 1625, cysteine 1599-cysteine 1610, cysteine 1640-cysteine 1680, cysteine 1644-cysteine 1685, and cysteine 1654-cysteine 1664. TSP type-1 domains are found at residues 1572-1626 (CGAW…EACP) and 1628-1686 (DGEW…EGCL). Asparagine 1598 is a glycosylation site (N-linked (GlcNAc...) asparagine). Residue asparagine 1687 is glycosylated (N-linked (GlcNAc...) asparagine). Positions 1692-1746 (GELVFRTCAPCPLTCDDISGQAACPPDRPCSSPGCWCPDGKVLNTEGQCVRPRQC) constitute a TIL 4 domain. EGF-like domains are found at residues 1702–1741 (CPLT…GQCV) and 1742–1768 (RPRQ…CQLC). Residues 1771 to 1827 (DCGWSSWSPWAECLGPCSSQSLQWSFRSPNNPRLSGHGRQCRGIHRKARRCQTEACE) enclose the TSP type-1 3 domain. Disulfide bonds link cysteine 1772/cysteine 1811, cysteine 1783/cysteine 1787, and cysteine 1821/cysteine 1826. The 61-residue stretch at 1827–1887 (EGCEQWGLMY…GMGESCCHCA (61 aa)) folds into the VWFC 2 domain. Residues asparagine 1892 and asparagine 1989 are each glycosylated (N-linked (GlcNAc...) asparagine). Positions 1929–2085 (CYSPLGLAGL…IFLWVELLGL (157 aa)) constitute an F5/8 type C domain. The 37-residue stretch at 2091–2127 (LCPGSRHRCASGECAPKGGPCDGAVDCDDGSDEEGCG) folds into the LDL-receptor class A 8 domain. 3 disulfide bridges follow: cysteine 2092–cysteine 2104, cysteine 2099–cysteine 2117, and cysteine 2111–cysteine 2126. The interval 2119–2209 (DGSDEEGCGS…TFPPGAKSLH (91 aa)) is disordered. Residues 2130–2144 (HASTTSRTPALSPTQ) are compositionally biased toward polar residues. Basic and acidic residues predominate over residues 2148 to 2158 (FPREVSEDLRQ). Composition is skewed to polar residues over residues 2164-2173 (TSHSPPSSGE) and 2190-2201 (QPMQTLSATSTF). 2 consecutive LDL-receptor class A domains span residues 2242–2278 (PCGP…QHCA) and 2299–2335 (LCSP…DNCV). Disulfide bonds link cysteine 2243-cysteine 2255, cysteine 2250-cysteine 2268, cysteine 2262-cysteine 2277, cysteine 2300-cysteine 2312, cysteine 2307-cysteine 2325, cysteine 2319-cysteine 2334, cysteine 2337-cysteine 2373, cysteine 2348-cysteine 2352, cysteine 2383-cysteine 2388, cysteine 2403-cysteine 2440, cysteine 2407-cysteine 2445, and cysteine 2418-cysteine 2430. TSP type-1 domains lie at 2336–2389 (DCVL…QACP) and 2391–2446 (AGAW…QLCP). Positions 2468–2511 (VPPCPPSCLDPEANRSCSGHCMEGCRCPPGLLLQDSHCLPLSEC) constitute a TIL 5 domain. 2 N-linked (GlcNAc...) asparagine glycosylation sites follow: asparagine 2481 and asparagine 2530. TSP type-1 domains are found at residues 2551–2605 (SCGW…TDCG), 2609–2664 (PGWT…PVCP), and 2666–2719 (PSAW…HPCT). 9 disulfides stabilise this stretch: cysteine 2552/cysteine 2590, cysteine 2563/cysteine 2567, cysteine 2600/cysteine 2604, cysteine 2620/cysteine 2658, cysteine 2624/cysteine 2663, cysteine 2640/cysteine 2648, cysteine 2678/cysteine 2713, cysteine 2682/cysteine 2718, and cysteine 2693/cysteine 2703. Asparagine 2772 and asparagine 2802 each carry an N-linked (GlcNAc...) asparagine glycan. TSP type-1 domains lie at 2820–2875 (ACGW…RPCR) and 2876–2919 (GPGA…QPCA). 3 cysteine pairs are disulfide-bonded: cysteine 2821–cysteine 2859, cysteine 2832–cysteine 2836, and cysteine 2869–cysteine 2874. N-linked (GlcNAc...) asparagine glycosylation is found at asparagine 2897, asparagine 2952, asparagine 2999, and asparagine 3009. The region spanning 2926-2978 (CPEDQQWLDCAQGPASCAHLSIPGEANQTCHPGCYCLSGMLLLNNVCVPVQDC) is the TIL 6 domain. TSP type-1 domains lie at 3019–3086 (QPAW…PGCN) and 3088–3143 (AGGW…QPCP). 6 disulfides stabilise this stretch: cysteine 3031/cysteine 3080, cysteine 3035/cysteine 3085, cysteine 3046/cysteine 3070, cysteine 3100/cysteine 3137, cysteine 3104/cysteine 3142, and cysteine 3115/cysteine 3127. A glycan (N-linked (GlcNAc...) asparagine) is linked at asparagine 3146. One can recognise a TIL 7 domain in the interval 3151–3201 (EGAEYSPCGPPCPRSCDDLVHCVWRCQPGCYCPLGKVLSADGAICVKPSYC). Asparagine 3235 carries an N-linked (GlcNAc...) asparagine glycan. 2 TSP type-1 domains span residues 3244–3306 (SGDW…TACP) and 3308–3363 (DGAW…TLCT). 6 disulfide bridges follow: cysteine 3256-cysteine 3299, cysteine 3260-cysteine 3305, cysteine 3271-cysteine 3283, cysteine 3320-cysteine 3355, cysteine 3323-cysteine 3362, and cysteine 3333-cysteine 3345. N-linked (GlcNAc...) asparagine glycosylation is present at asparagine 3301. N-linked (GlcNAc...) asparagine glycosylation is present at asparagine 3357. In terms of domain architecture, TIL 8 spans 3365-3421 (CGGGQDLLPCGQPCPHSCQDLSLGSTCQPGSAGCQSGCGCPPGQLSQDGLCVFPVDC). N-linked (GlcNAc...) asparagine glycans are attached at residues asparagine 3435 and asparagine 3462. Positions 3481–3529 (PGIWSSWGPWEKCSVSCGGGEQLRSRQCARPPCPGLAQQSRICHIHVCR) constitute a TSP type-1 15 domain. 3 disulfide bridges follow: cysteine 3493–cysteine 3523, cysteine 3497–cysteine 3528, and cysteine 3508–cysteine 3513. Residue asparagine 3638 is glycosylated (N-linked (GlcNAc...) asparagine). TSP type-1 domains are found at residues 3657–3713 (HGSF…PECP), 3727–3779 (AGGW…PSCA), 3793–3849 (NCFW…RACP), and 3851–3906 (PGGW…MPCE). 3 disulfide bridges follow: cysteine 3669-cysteine 3707, cysteine 3673-cysteine 3712, and cysteine 3685-cysteine 3697. An N-linked (GlcNAc...) asparagine glycan is attached at asparagine 3761. 6 disulfide bridges follow: cysteine 3794/cysteine 3830, cysteine 3805/cysteine 3809, cysteine 3843/cysteine 3848, cysteine 3863/cysteine 3900, cysteine 3867/cysteine 3905, and cysteine 3878/cysteine 3890. One can recognise a TIL 9 domain in the interval 3909 to 3964 (CPAGMEMVSCANHCPYSCSDLQEGGMCQEDQACQLGCRCSEGFLEQDGGCVPVGHC). The N-linked (GlcNAc...) asparagine glycan is linked to asparagine 3986. 4 consecutive TSP type-1 domains span residues 4006–4059 (HCAW…VPCP), 4100–4155 (PRGW…QLCL), 4157–4213 (KLER…GPCQ), and 4215–4269 (DCTW…GNCS). Disulfide bonds link cysteine 4007/cysteine 4043, cysteine 4018/cysteine 4022, cysteine 4053/cysteine 4058, cysteine 4112/cysteine 4149, cysteine 4116/cysteine 4154, cysteine 4127/cysteine 4139, cysteine 4169/cysteine 4207, cysteine 4173/cysteine 4212, cysteine 4184/cysteine 4195, cysteine 4216/cysteine 4253, cysteine 4227/cysteine 4229, and cysteine 4263/cysteine 4268. An N-linked (GlcNAc...) asparagine glycan is attached at asparagine 4196. N-linked (GlcNAc...) asparagine glycosylation occurs at asparagine 4267. Positions 4273-4328 (CPPPFEFQSCGSPCAGLCATHLNHRLCQDLPPCQPGCYCPKGLLEQAGSCILPEQC) constitute a TIL 10 domain. Residues asparagine 4408 and asparagine 4463 are each glycosylated (N-linked (GlcNAc...) asparagine). The 52-residue stretch at 4465 to 4516 (TCQWGPWGPWSPCQMPCSGGFKLRWRVARDTSAGECPGPWAQTESCNMGSCP) folds into the TSP type-1 24 domain. 3 disulfides stabilise this stretch: cysteine 4466/cysteine 4500, cysteine 4477/cysteine 4481, and cysteine 4510/cysteine 4515. A TIL 11 domain is found at 4530–4576 (DCANQCPRSCADLWDGVQCLQGPCSPGCRCPPGQLVQDGHCVPISSC). 3 N-linked (GlcNAc...) asparagine glycosylation sites follow: asparagine 4584, asparagine 4601, and asparagine 4606. Residues 4616-4669 (CPVLGPWSAWSECSAVCGKGTMVRHRSCEEHPDREPCQALDLQQWQECNLQACP) enclose the TSP type-1 25 domain. 3 disulfides stabilise this stretch: cysteine 4628-cysteine 4663, cysteine 4632-cysteine 4668, and cysteine 4643-cysteine 4652. The 55-residue stretch at 4671–4725 (CPPGQVLSTCATMCPSLCSHLWPGTICVREPCQLGCGCPGGQLLYNGTCIPPEAC) folds into the TIL 12 domain. 4 N-linked (GlcNAc...) asparagine glycosylation sites follow: asparagine 4716, asparagine 4756, asparagine 4799, and asparagine 4806. The TIL 13 domain maps to 4777–4835 (CAPGEIWQHGKLGPCEKTCPEMNMTQAWSNCTEAQAPGCVCQLGYFRSQTGLCVPEDHC). In terms of domain architecture, VWFC 3 spans 4835-4893 (CECWHHGSPHLPGSEWQEACESCRCLHGKSVCIRHCPELSCAQGEVIMQEPGSCCPICQ). 4 disulfides stabilise this stretch: cysteine 4892–cysteine 4952, cysteine 4918–cysteine 4969, cysteine 4928–cysteine 4985, and cysteine 4932–cysteine 4987. The CTCK domain maps to 4892 to 4991 (CQQDTLKEEP…IHSCQCSACQ (100 aa)). Asparagine 4912 carries N-linked (GlcNAc...) asparagine glycosylation.

The protein belongs to the thrombospondin family. In terms of tissue distribution, subcommissural organ.

It localises to the secreted. Its subcellular location is the extracellular space. Its function is as follows. Involved in the modulation of neuronal aggregation. May be involved in developmental events during the formation of the central nervous system. This Mus musculus (Mouse) protein is SCO-spondin.